The chain runs to 238 residues: Purine nucleoside phosphorylase DeoD-type (238 aa).

Position 4 (histidine 4) interacts with a purine D-ribonucleoside. Phosphate-binding positions include glycine 20, arginine 24, arginine 43, and 87–90; that span reads RVGT. A purine D-ribonucleoside is bound by residues 179 to 181 and 203 to 204; these read EME and SN.

The protein belongs to the PNP/UDP phosphorylase family. Homohexamer; trimer of homodimers.

It carries out the reaction a purine D-ribonucleoside + phosphate = a purine nucleobase + alpha-D-ribose 1-phosphate. The enzyme catalyses a purine 2'-deoxy-D-ribonucleoside + phosphate = a purine nucleobase + 2-deoxy-alpha-D-ribose 1-phosphate. Its function is as follows. Catalyzes the reversible phosphorolytic breakdown of the N-glycosidic bond in the beta-(deoxy)ribonucleoside molecules, with the formation of the corresponding free purine bases and pentose-1-phosphate. The protein is Purine nucleoside phosphorylase DeoD-type of Lacticaseibacillus casei (strain BL23) (Lactobacillus casei).